Consider the following 270-residue polypeptide: 3-methyl-2-oxobutanoate hydroxymethyltransferase (270 aa).

Mg(2+) contacts are provided by aspartate 41 and aspartate 80. 3-methyl-2-oxobutanoate contacts are provided by residues 41–42, aspartate 80, and lysine 109; that span reads DS. Glutamate 111 provides a ligand contact to Mg(2+). Residue glutamate 178 is the Proton acceptor of the active site.

The protein belongs to the PanB family. As to quaternary structure, homodecamer; pentamer of dimers. The cofactor is Mg(2+).

The protein resides in the cytoplasm. The enzyme catalyses 3-methyl-2-oxobutanoate + (6R)-5,10-methylene-5,6,7,8-tetrahydrofolate + H2O = 2-dehydropantoate + (6S)-5,6,7,8-tetrahydrofolate. The protein operates within cofactor biosynthesis; (R)-pantothenate biosynthesis; (R)-pantoate from 3-methyl-2-oxobutanoate: step 1/2. Its function is as follows. Catalyzes the reversible reaction in which hydroxymethyl group from 5,10-methylenetetrahydrofolate is transferred onto alpha-ketoisovalerate to form ketopantoate. This chain is 3-methyl-2-oxobutanoate hydroxymethyltransferase, found in Thermotoga neapolitana (strain ATCC 49049 / DSM 4359 / NBRC 107923 / NS-E).